Reading from the N-terminus, the 605-residue chain is MADPKGSTSKDGLDDWCIVEAECSDVDNDLEELFDRDTDSDISELLDDNDLEQGNSRELFHQQECKDSEEQLQKLKRKYISPKAIAQLSPRLESISLSPQQKSKRRLFAEQDSGLELTLTNEAEDVSSEVEEVPALDSQPVAEGHLGTVDIHYTELLRASNHKAILLAKFKEAFGIGFNDLTRQFKSYKTCCNDWVLSVYAVHEDLLESSKQLLQQHCDYIWIRGIAAMSLFLLCFKAGKNRGTVHKLMTSMLNVHEKQILSEPPKLRNVAAALFWYKGAMGSGAFSHGPYPNWMAQQTIVGHQSTEASAFDLSEMIQWAFDHNYLDEADIAFQYAKLAPENSNAVAWLAHNNQARFVRECASMVRFYKKGQMKEMSMSEWIYARINEVEGEGHWSSIAKFLRYQQVNVIMFLAALKDMLHSVPKHNCILIHGPPNTGKSAFTMSLIHVLKGRVLSFVNSKSQFWLQPMSETKIALIDDVTDPCWVYMDTYLRNGLDGHYVSLDCKHKAPIQTKFPALLLTSNINVHNEVNYRYLHSRIKGFEFPNPFPMKPDNTPEFELTDQSWKSFFTRLWKQLELSDQEDEGENGESQQAFQCSARSANEHL.

The Nuclear localization signal motif lies at 76-78; the sequence is KRK. Serine 81 and serine 89 each carry phosphoserine; by host. Positions 88–97 match the Nuclear export signal motif; that stretch reads LSPRLESISL. Positions 145–308 are DNA-binding region; that stretch reads HLGTVDIHYT…TIVGHQSTEA (164 aa). In terms of domain architecture, SF3 helicase spans 407-557; sequence VNVIMFLAAL…FPMKPDNTPE (151 aa). 433–440 is a binding site for ATP; sequence GPPNTGKS. Lysine 514 participates in a covalent cross-link: Glycyl lysine isopeptide (Lys-Gly) (interchain with G-Cter in SUMO). The segment at 580–605 is disordered; that stretch reads DQEDEGENGESQQAFQCSARSANEHL. The span at 588–605 shows a compositional bias: polar residues; the sequence is GESQQAFQCSARSANEHL.

It belongs to the papillomaviridae E1 protein family. As to quaternary structure, can form hexamers. Interacts with E2 protein; this interaction increases E1 DNA binding specificity. Interacts with host DNA polymerase subunit POLA2. Interacts with host single stranded DNA-binding protein RPA1. Interacts with host TOP1; this interaction stimulates the enzymatic activity of TOP1. In terms of processing, phosphorylated. Post-translationally, sumoylated.

Its subcellular location is the host nucleus. It catalyses the reaction Couples ATP hydrolysis with the unwinding of duplex DNA by translocating in the 3'-5' direction.. The catalysed reaction is ATP + H2O = ADP + phosphate + H(+). ATP-dependent DNA 3'-5' helicase required for initiation of viral DNA replication. It forms a complex with the viral E2 protein. The E1-E2 complex binds to the replication origin which contains binding sites for both proteins. During the initial step, a dimer of E1 interacts with a dimer of protein E2 leading to a complex that binds the viral origin of replication with high specificity. Then, a second dimer of E1 displaces the E2 dimer in an ATP-dependent manner to form the E1 tetramer. Following this, two E1 monomers are added to each half of the site, which results in the formation of two E1 trimers on the viral ori. Subsequently, two hexamers will be created. The double hexamer acts as a bi-directional helicase machinery and unwinds the viral DNA and then recruits the host DNA polymerase to start replication. The chain is Replication protein E1 from Homo sapiens (Human).